Reading from the N-terminus, the 175-residue chain is METNCPNILYLSGITIEECLQSKKTSTDALNTNGDEAEVEKKLPSVFTSVSKWVTYSSFKCWTCHLYFKTVPKFVPTYMRENERGEIEMGVLGNFCSFSCAASYIDLHYTEPKRWEARELLNMLYRFFTSQWISYIRPALSYTMRKEYGGKLSEEAFISELHTLEESISSKDIFI.

The protein belongs to the asfivirus B175L family.

This is an uncharacterized protein from Ornithodoros (relapsing fever ticks).